Reading from the N-terminus, the 425-residue chain is Enolase (425 aa).

Gln-164 is a binding site for (2R)-2-phosphoglycerate. The Proton donor role is filled by Glu-208. Mg(2+)-binding residues include Asp-243, Glu-286, and Asp-312. The (2R)-2-phosphoglycerate site is built by Lys-337, Arg-366, Ser-367, and Lys-388. Lys-337 (proton acceptor) is an active-site residue.

It belongs to the enolase family. Requires Mg(2+) as cofactor.

The protein resides in the cytoplasm. Its subcellular location is the secreted. The protein localises to the cell surface. The enzyme catalyses (2R)-2-phosphoglycerate = phosphoenolpyruvate + H2O. The protein operates within carbohydrate degradation; glycolysis; pyruvate from D-glyceraldehyde 3-phosphate: step 4/5. Its function is as follows. Catalyzes the reversible conversion of 2-phosphoglycerate (2-PG) into phosphoenolpyruvate (PEP). It is essential for the degradation of carbohydrates via glycolysis. The sequence is that of Enolase from Methanococcus aeolicus (strain ATCC BAA-1280 / DSM 17508 / OCM 812 / Nankai-3).